The primary structure comprises 524 residues: Na(+)/H(+) antiporter NhaB (524 aa).

12 consecutive transmembrane segments (helical) span residues 23-43 (IAILAFLIINPLVFSLSPFYA), 44-64 (GWLLVIEFIFTLAMALKCYPL), 97-117 (LLLIFMVAGIYFMKQLLLFVF), 120-140 (LLLNIRSKIVLSLAFCLAAAF), 144-164 (FLDALTVIAVVISVAVGFYGI), 203-223 (LLMHAGVGTALGGVMTMVGEP), 236-256 (FVSFLLRMAPVTVPVFCCGIL), 304-324 (ALVGVWLVSALAFHLAEVGLI), 354-374 (FTALLTVFFSIVAVIIDQHLF), 392-412 (LFYLFNGLLSSISDNVFVGTV), 448-468 (ATPNGQAAFLFLLTSALAPLI), and 476-496 (VWMALPYTVVMTLVGLLCVIF).

It belongs to the NhaB Na(+)/H(+) (TC 2.A.34) antiporter family.

The protein resides in the cell inner membrane. It carries out the reaction 2 Na(+)(in) + 3 H(+)(out) = 2 Na(+)(out) + 3 H(+)(in). Functionally, na(+)/H(+) antiporter that extrudes sodium in exchange for external protons. The polypeptide is Na(+)/H(+) antiporter NhaB (Edwardsiella ictaluri (strain 93-146)).